Here is a 525-residue protein sequence, read N- to C-terminus: BTB/POZ domain-containing protein At1g50280 (525 aa).

In terms of domain architecture, BTB spans 5-79 (NDLKINLNGQ…CYHNGEILID (75 aa)). Positions 200 to 466 (EWWFEDMTNL…IEALKSRCGN (267 aa)) constitute an NPH3 domain.

The protein belongs to the NPH3 family.

Its pathway is protein modification; protein ubiquitination. May act as a substrate-specific adapter of an E3 ubiquitin-protein ligase complex (CUL3-RBX1-BTB) which mediates the ubiquitination and subsequent proteasomal degradation of target proteins. This is BTB/POZ domain-containing protein At1g50280 from Arabidopsis thaliana (Mouse-ear cress).